The sequence spans 425 residues: UDP-N-acetylglucosamine 1-carboxyvinyltransferase (425 aa).

Residue 22 to 23 (KN) coordinates phosphoenolpyruvate. Position 98 (R98) interacts with UDP-N-acetyl-alpha-D-glucosamine. The Proton donor role is filled by C122. C122 is subject to 2-(S-cysteinyl)pyruvic acid O-phosphothioketal. Residues 127-131 (RPVDQ), D313, and I335 each bind UDP-N-acetyl-alpha-D-glucosamine.

It belongs to the EPSP synthase family. MurA subfamily.

The protein localises to the cytoplasm. The catalysed reaction is phosphoenolpyruvate + UDP-N-acetyl-alpha-D-glucosamine = UDP-N-acetyl-3-O-(1-carboxyvinyl)-alpha-D-glucosamine + phosphate. Its pathway is cell wall biogenesis; peptidoglycan biosynthesis. In terms of biological role, cell wall formation. Adds enolpyruvyl to UDP-N-acetylglucosamine. The chain is UDP-N-acetylglucosamine 1-carboxyvinyltransferase from Xylella fastidiosa (strain 9a5c).